Reading from the N-terminus, the 341-residue chain is Holliday junction branch migration complex subunit RuvB (341 aa).

The segment at 1–21 (MSQPDPMLRPEPLESDGEDRA) is disordered. A large ATPase domain (RuvB-L) region spans residues 4–183 (PDPMLRPEPL…FGIPTRLQFY (180 aa)). Residues leucine 22, arginine 23, glycine 64, lysine 67, threonine 68, threonine 69, 130-132 (EDF), arginine 173, tyrosine 183, and arginine 220 each bind ATP. Threonine 68 contributes to the Mg(2+) binding site. Residues 184-254 (TIEELDLIVT…IADSALTRLG (71 aa)) are small ATPAse domain (RuvB-S). The interval 257 to 341 (HLGLDTADRR…PRTQESLFDE (85 aa)) is head domain (RuvB-H). Arginine 293, arginine 312, and arginine 317 together coordinate DNA.

The protein belongs to the RuvB family. Homohexamer. Forms an RuvA(8)-RuvB(12)-Holliday junction (HJ) complex. HJ DNA is sandwiched between 2 RuvA tetramers; dsDNA enters through RuvA and exits via RuvB. An RuvB hexamer assembles on each DNA strand where it exits the tetramer. Each RuvB hexamer is contacted by two RuvA subunits (via domain III) on 2 adjacent RuvB subunits; this complex drives branch migration. In the full resolvosome a probable DNA-RuvA(4)-RuvB(12)-RuvC(2) complex forms which resolves the HJ.

The protein resides in the cytoplasm. The catalysed reaction is ATP + H2O = ADP + phosphate + H(+). The RuvA-RuvB-RuvC complex processes Holliday junction (HJ) DNA during genetic recombination and DNA repair, while the RuvA-RuvB complex plays an important role in the rescue of blocked DNA replication forks via replication fork reversal (RFR). RuvA specifically binds to HJ cruciform DNA, conferring on it an open structure. The RuvB hexamer acts as an ATP-dependent pump, pulling dsDNA into and through the RuvAB complex. RuvB forms 2 homohexamers on either side of HJ DNA bound by 1 or 2 RuvA tetramers; 4 subunits per hexamer contact DNA at a time. Coordinated motions by a converter formed by DNA-disengaged RuvB subunits stimulates ATP hydrolysis and nucleotide exchange. Immobilization of the converter enables RuvB to convert the ATP-contained energy into a lever motion, pulling 2 nucleotides of DNA out of the RuvA tetramer per ATP hydrolyzed, thus driving DNA branch migration. The RuvB motors rotate together with the DNA substrate, which together with the progressing nucleotide cycle form the mechanistic basis for DNA recombination by continuous HJ branch migration. Branch migration allows RuvC to scan DNA until it finds its consensus sequence, where it cleaves and resolves cruciform DNA. The chain is Holliday junction branch migration complex subunit RuvB from Paracoccus denitrificans (strain Pd 1222).